The chain runs to 261 residues: 14-3-3 protein 8 (261 aa).

Residues 237-261 (DIPEDGEEAPKGDAANKVGAGEDAE) form a disordered region.

This sequence belongs to the 14-3-3 family. In terms of assembly, homodimer.

This chain is 14-3-3 protein 8 (TFT8), found in Solanum lycopersicum (Tomato).